Consider the following 232-residue polypeptide: Recombination protein RecR (232 aa).

A C4-type zinc finger spans residues 92-107; sequence CQVCFHLSAEPVCDIC. Residues 115-209 enclose the Toprim domain; the sequence is SVICVVSDPR…KVTRIAFGLP (95 aa).

It belongs to the RecR family.

In terms of biological role, may play a role in DNA repair. It seems to be involved in an RecBC-independent recombinational process of DNA repair. It may act with RecF and RecO. This chain is Recombination protein RecR, found in Synechocystis sp. (strain ATCC 27184 / PCC 6803 / Kazusa).